A 538-amino-acid polypeptide reads, in one-letter code: Chaperonin GroEL (538 aa).

ATP is bound by residues 30-33, 87-91, Gly415, 479-481, and Asp495; these read TLGP, DGTTT, and DAA.

The protein belongs to the chaperonin (HSP60) family. As to quaternary structure, forms a cylinder of 14 subunits composed of two heptameric rings stacked back-to-back. Interacts with the co-chaperonin GroES.

It is found in the cytoplasm. The catalysed reaction is ATP + H2O + a folded polypeptide = ADP + phosphate + an unfolded polypeptide.. Its function is as follows. Together with its co-chaperonin GroES, plays an essential role in assisting protein folding. The GroEL-GroES system forms a nano-cage that allows encapsulation of the non-native substrate proteins and provides a physical environment optimized to promote and accelerate protein folding. In Dictyoglomus thermophilum (strain ATCC 35947 / DSM 3960 / H-6-12), this protein is Chaperonin GroEL.